Here is a 441-residue protein sequence, read N- to C-terminus: 3-phosphoshikimate 1-carboxyvinyltransferase (441 aa).

A compositionally biased stretch (polar residues) spans 1–10 (MSVTSTASSS). Residues 1–21 (MSVTSTASSSRELRAGGGLSG) are disordered. 3-phosphoshikimate contacts are provided by K29, S30, and R34. K29 is a phosphoenolpyruvate binding site. Phosphoenolpyruvate is bound by residues G103 and R132. 4 residues coordinate 3-phosphoshikimate: S177, Q179, D328, and K355. Position 179 (Q179) interacts with phosphoenolpyruvate. The active-site Proton acceptor is the D328. R359 and R401 together coordinate phosphoenolpyruvate.

The protein belongs to the EPSP synthase family. As to quaternary structure, monomer.

Its subcellular location is the cytoplasm. It carries out the reaction 3-phosphoshikimate + phosphoenolpyruvate = 5-O-(1-carboxyvinyl)-3-phosphoshikimate + phosphate. Its pathway is metabolic intermediate biosynthesis; chorismate biosynthesis; chorismate from D-erythrose 4-phosphate and phosphoenolpyruvate: step 6/7. Its function is as follows. Catalyzes the transfer of the enolpyruvyl moiety of phosphoenolpyruvate (PEP) to the 5-hydroxyl of shikimate-3-phosphate (S3P) to produce enolpyruvyl shikimate-3-phosphate and inorganic phosphate. The protein is 3-phosphoshikimate 1-carboxyvinyltransferase of Prochlorococcus marinus (strain MIT 9303).